Here is a 123-residue protein sequence, read N- to C-terminus: Putative membrane protein insertion efficiency factor (123 aa).

The segment at 1-23 (MGSCGGKHTGKGAPKPYSRNFTD) is disordered.

Belongs to the UPF0161 family.

The protein localises to the cell inner membrane. Its function is as follows. Could be involved in insertion of integral membrane proteins into the membrane. This is Putative membrane protein insertion efficiency factor from Brucella ovis (strain ATCC 25840 / 63/290 / NCTC 10512).